A 496-amino-acid chain; its full sequence is Probable G-protein coupled receptor K01A12.3 (496 aa).

At M1–S19 the chain is on the extracellular side. The chain crosses the membrane as a helical span at residues Y20–V40. Residues T41–T58 are Cytoplasmic-facing. A helical transmembrane segment spans residues I59 to G79. The Extracellular portion of the chain corresponds to M80–H128. N-linked (GlcNAc...) asparagine glycosylation occurs at N111. A helical transmembrane segment spans residues A129 to L149. The Cytoplasmic portion of the chain corresponds to G150–Q169. A helical membrane pass occupies residues V170–V190. Topologically, residues G191–T216 are extracellular. Residues T217–C237 traverse the membrane as a helical segment. Topologically, residues S238–R285 are cytoplasmic. A helical membrane pass occupies residues L286 to I306. At K307–Q318 the chain is on the extracellular side. Residues L319–Y339 form a helical membrane-spanning segment. Residues F340–I496 are Cytoplasmic-facing. Positions T451–R470 are disordered.

The protein belongs to the G-protein coupled receptor 1 family.

The protein resides in the cell membrane. In Caenorhabditis elegans, this protein is Probable G-protein coupled receptor K01A12.3.